A 311-amino-acid polypeptide reads, in one-letter code: Malate dehydrogenase (311 aa).

NAD(+) is bound by residues 7-13 (GAAGGIG) and Asp-34. Substrate contacts are provided by Arg-81 and Arg-87. NAD(+)-binding positions include Asn-94 and 117-119 (ITN). Residues Asn-119 and Arg-153 each coordinate substrate. Residue His-177 is the Proton acceptor of the active site. Residue Met-227 coordinates NAD(+).

It belongs to the LDH/MDH superfamily. MDH type 1 family. Homodimer.

The catalysed reaction is (S)-malate + NAD(+) = oxaloacetate + NADH + H(+). In terms of biological role, catalyzes the reversible oxidation of malate to oxaloacetate. The sequence is that of Malate dehydrogenase from Histophilus somni (strain 129Pt) (Haemophilus somnus).